The chain runs to 187 residues: UPF0232 protein Mb0004 (187 aa).

2 stretches are compositionally biased toward basic and acidic residues: residues 1-17 and 35-45; these read MTGSVDRPDQNRGERLM and AARARGQDAGR. Disordered stretches follow at residues 1–23, 35–75, and 168–187; these read MTGSVDRPDQNRGERLMKSPGLD, AARA…DPQP, and PSWRKGPRHIAGRGPRDTYG.

Belongs to the UPF0232 family.

The sequence is that of UPF0232 protein Mb0004 from Mycobacterium bovis (strain ATCC BAA-935 / AF2122/97).